Consider the following 421-residue polypeptide: 3-oxoacyl-[acyl-carrier-protein] synthase 2 (421 aa).

The Ketosynthase family 3 (KS3) domain occupies 1–417 (MRRVVITGTG…GTNASLILRR (417 aa)). Residues cysteine 170, histidine 311, and histidine 347 each act as for beta-ketoacyl synthase activity in the active site.

It belongs to the thiolase-like superfamily. Beta-ketoacyl-ACP synthases family. As to quaternary structure, homodimer.

It catalyses the reaction a fatty acyl-[ACP] + malonyl-[ACP] + H(+) = a 3-oxoacyl-[ACP] + holo-[ACP] + CO2. The enzyme catalyses (9Z)-hexadecenoyl-[ACP] + malonyl-[ACP] + H(+) = 3-oxo-(11Z)-octadecenoyl-[ACP] + holo-[ACP] + CO2. It functions in the pathway lipid metabolism; fatty acid biosynthesis. Functionally, involved in the type II fatty acid elongation cycle. Catalyzes the elongation of a wide range of acyl-ACP by the addition of two carbons from malonyl-ACP to an acyl acceptor. Can efficiently catalyze the conversion of palmitoleoyl-ACP (cis-hexadec-9-enoyl-ACP) to cis-vaccenoyl-ACP (cis-octadec-11-enoyl-ACP), an essential step in the thermal regulation of fatty acid composition. The chain is 3-oxoacyl-[acyl-carrier-protein] synthase 2 (fabF) from Rhizobium meliloti (strain 1021) (Ensifer meliloti).